The chain runs to 199 residues: Inosine triphosphate pyrophosphatase (199 aa).

ITP is bound at residue 12–17 (TGNAKK). Glutamate 42 serves as a coordination point for Mg(2+). ITP is bound by residues lysine 54, 70–71 (DT), lysine 87, 146–149 (FGWD), lysine 169, and 174–175 (HR).

Belongs to the HAM1 NTPase family. As to quaternary structure, homodimer. Mg(2+) is required as a cofactor. The cofactor is Mn(2+).

It localises to the cytoplasm. The enzyme catalyses ITP + H2O = IMP + diphosphate + H(+). It carries out the reaction dITP + H2O = dIMP + diphosphate + H(+). The catalysed reaction is XTP + H2O = XMP + diphosphate + H(+). Its function is as follows. Pyrophosphatase that hydrolyzes non-canonical purine nucleotides such as inosine triphosphate (ITP), deoxyinosine triphosphate (dITP) or xanthosine 5'-triphosphate (XTP) to their respective monophosphate derivatives. The enzyme does not distinguish between the deoxy- and ribose forms. Probably excludes non-canonical purines from RNA and DNA precursor pools, thus preventing their incorporation into RNA and DNA and avoiding chromosomal lesions. This Monosiga brevicollis (Choanoflagellate) protein is Inosine triphosphate pyrophosphatase.